The chain runs to 214 residues: Oxaloacetate tautomerase fahd-1, mitochondrial (214 aa).

The Mg(2+) site is built by Glu65, Glu67, and Asp96.

Belongs to the FAH family. Mg(2+) is required as a cofactor. The cofactor is Mn(2+). In terms of tissue distribution, widely expressed.

It localises to the mitochondrion. The catalysed reaction is oxaloacetate = enol-oxaloacetate. Tautomerase that converts enol-oxaloacetate, a strong inhibitor of succinate dehydrogenase, to the physiological keto form of oxaloacetate. The chain is Oxaloacetate tautomerase fahd-1, mitochondrial from Caenorhabditis elegans.